Reading from the N-terminus, the 1302-residue chain is Ubiquitin conjugation factor E4 B (1302 aa).

Met-1 is subject to N-acetylmethionine. Residues 1-155 (MEELSADEIR…EPSSGPEVSE (155 aa)) are disordered. Positions 16–33 (RLAGGQTSQPTTPLTSPQ) are enriched in low complexity. 2 positions are modified to phosphoserine: Ser-23 and Ser-31. Polar residues predominate over residues 51-64 (QSLGLNVHNMTPAT). The segment covering 76–99 (SQSSEGVSSLSSSPSNSLETQSQS) has biased composition (low complexity). 7 positions are modified to phosphoserine: Ser-84, Ser-88, Ser-90, Ser-101, Ser-103, Ser-105, and Ser-124. Basic and acidic residues predominate over residues 134–147 (NDRREKRSLSDKEP). Ser-238 carries the phosphoserine modification. Residues 299–327 (AASQLAVPSTPLSPHSAASGTAAGSQPSS) show a composition bias toward polar residues. The segment at 299 to 406 (AASQLAVPST…SPSLGASGGA (108 aa)) is disordered. Residues 340–374 (ASSGVSILSSSPSPPALASSPQAVPASSSRQRPSS) show a composition bias toward low complexity. A Phosphoserine modification is found at Ser-383. Residues 384 to 400 (PSATSRRPSSLRISPSL) show a composition bias toward low complexity. Ser-803 and Ser-969 each carry phosphoserine. A disordered region spans residues 1057-1077 (NKEQWDQLPRDQQQARQSQLA). Residues 1066 to 1077 (RDQQQARQSQLA) are compositionally biased toward low complexity. Positions 1227-1300 (DAPDEFRDPL…QAWMREKQNS (74 aa)) constitute a U-box domain. Ser-1265 carries the phosphoserine modification.

This sequence belongs to the ubiquitin conjugation factor E4 family. In terms of assembly, interacts with VCP/p97. Interacts with STUB1/CHIP and UNC45B. In terms of processing, proteolytically cleaved by caspases during apoptosis. Cleaved efficiently at Asp-123 by caspase-6 and granzyme B. Cleaved with approximately 10-fold less efficiency at Asp-109 by caspase-3 and caspase-7. Expressed in differentiated myotubes (at protein level). Highest expression in ovary, testis, heart and skeletal muscle. Expression is low in colon, thymus and peripheral blood leukocytes. Almost undetectable in lung and spleen.

It localises to the cytoplasm. It is found in the nucleus. The catalysed reaction is S-ubiquitinyl-[E2 ubiquitin-conjugating enzyme]-L-cysteine + [acceptor protein]-L-lysine = [E2 ubiquitin-conjugating enzyme]-L-cysteine + N(6)-ubiquitinyl-[acceptor protein]-L-lysine.. The protein operates within protein modification; protein ubiquitination. In terms of biological role, ubiquitin-protein ligase that probably functions as an E3 ligase in conjunction with specific E1 and E2 ligases. May also function as an E4 ligase mediating the assembly of polyubiquitin chains on substrates ubiquitinated by another E3 ubiquitin ligase. May regulate myosin assembly in striated muscles together with STUB1 and VCP/p97 by targeting myosin chaperone UNC45B for proteasomal degradation. This is Ubiquitin conjugation factor E4 B from Homo sapiens (Human).